The sequence spans 136 residues: ATP synthase epsilon chain (136 aa).

It belongs to the ATPase epsilon chain family. As to quaternary structure, F-type ATPases have 2 components, CF(1) - the catalytic core - and CF(0) - the membrane proton channel. CF(1) has five subunits: alpha(3), beta(3), gamma(1), delta(1), epsilon(1). CF(0) has three main subunits: a, b and c.

It is found in the cell inner membrane. Produces ATP from ADP in the presence of a proton gradient across the membrane. This Hydrogenobaculum sp. (strain Y04AAS1) protein is ATP synthase epsilon chain.